The sequence spans 64 residues: Large ribosomal subunit protein bL35 (64 aa).

Basic residues predominate over residues Met-1–Arg-44. The interval Met-1–Gln-48 is disordered.

The protein belongs to the bacterial ribosomal protein bL35 family.

The protein is Large ribosomal subunit protein bL35 of Marinomonas sp. (strain MWYL1).